We begin with the raw amino-acid sequence, 328 residues long: MIYQMQMPERIEVDEATHSESIGQFVAQPLERGYGVTLGNAMRRVLLASLPGTAITGIKIDGVFHEFSTIDGVREDVPEIVLNLKKVRFKSTTKRSCKTSLSIEGPADFKAGDIVAQEGEFEVLNKDMHIATLNGDAKLNIDIYIGRGRGYVPAEENRGEGMPIGFIAIDSIFTPIKNVKFSVENTRVGQRTDYEKMILDVETDGSISPDDSISLAGKVINEHVSLFANFSPTEEEFAEEEYKQQDDEFENMRKLLQTRIEDLDLSVRSHNCLRLAEIDTLGDLVSRKEDELLTYKNFGKKSLTELKEQLDKCELKFGMDITKYQMKS.

The tract at residues 1 to 231 (MIYQMQMPER…EHVSLFANFS (231 aa)) is alpha N-terminal domain (alpha-NTD). Positions 252-328 (MRKLLQTRIE…MDITKYQMKS (77 aa)) are alpha C-terminal domain (alpha-CTD).

This sequence belongs to the RNA polymerase alpha chain family. Homodimer. The RNAP catalytic core consists of 2 alpha, 1 beta, 1 beta' and 1 omega subunit. When a sigma factor is associated with the core the holoenzyme is formed, which can initiate transcription.

It carries out the reaction RNA(n) + a ribonucleoside 5'-triphosphate = RNA(n+1) + diphosphate. Functionally, DNA-dependent RNA polymerase catalyzes the transcription of DNA into RNA using the four ribonucleoside triphosphates as substrates. The chain is DNA-directed RNA polymerase subunit alpha from Prosthecochloris aestuarii (strain DSM 271 / SK 413).